The sequence spans 315 residues: Ribosomal protein L11 methyltransferase (315 aa).

Residues T162, G183, D205, and N248 each coordinate S-adenosyl-L-methionine.

It belongs to the methyltransferase superfamily. PrmA family.

The protein localises to the cytoplasm. The catalysed reaction is L-lysyl-[protein] + 3 S-adenosyl-L-methionine = N(6),N(6),N(6)-trimethyl-L-lysyl-[protein] + 3 S-adenosyl-L-homocysteine + 3 H(+). In terms of biological role, methylates ribosomal protein L11. The chain is Ribosomal protein L11 methyltransferase from Oceanobacillus iheyensis (strain DSM 14371 / CIP 107618 / JCM 11309 / KCTC 3954 / HTE831).